Consider the following 1250-residue polypeptide: DNA-directed RNA polymerase subunit beta (1250 aa).

A disordered region spans residues 1139 to 1226 (GGAELAKPAP…DLFDEGDEDL (88 aa)). Composition is skewed to acidic residues over residues 1155–1183 (ESGE…DPEE) and 1207–1226 (ADDD…DEDL).

It belongs to the RNA polymerase beta chain family. As to quaternary structure, the RNAP catalytic core consists of 2 alpha, 1 beta, 1 beta' and 1 omega subunit. When a sigma factor is associated with the core the holoenzyme is formed, which can initiate transcription.

The enzyme catalyses RNA(n) + a ribonucleoside 5'-triphosphate = RNA(n+1) + diphosphate. In terms of biological role, DNA-dependent RNA polymerase catalyzes the transcription of DNA into RNA using the four ribonucleoside triphosphates as substrates. In Symbiobacterium thermophilum (strain DSM 24528 / JCM 14929 / IAM 14863 / T), this protein is DNA-directed RNA polymerase subunit beta.